Consider the following 329-residue polypeptide: Beta-ketoacyl-[acyl-carrier-protein] synthase III (329 aa).

Residues Cys-113 and His-255 contribute to the active site. An ACP-binding region spans residues 256–260 (QANQR). Asn-285 is a catalytic residue.

The protein belongs to the thiolase-like superfamily. FabH family. In terms of assembly, homodimer.

The protein resides in the cytoplasm. It catalyses the reaction malonyl-[ACP] + acetyl-CoA + H(+) = 3-oxobutanoyl-[ACP] + CO2 + CoA. Its pathway is lipid metabolism; fatty acid biosynthesis. Its function is as follows. Catalyzes the condensation reaction of fatty acid synthesis by the addition to an acyl acceptor of two carbons from malonyl-ACP. Catalyzes the first condensation reaction which initiates fatty acid synthesis and may therefore play a role in governing the total rate of fatty acid production. Possesses both acetoacetyl-ACP synthase and acetyl transacylase activities. Its substrate specificity determines the biosynthesis of branched-chain and/or straight-chain of fatty acids. This Chlorobium phaeovibrioides (strain DSM 265 / 1930) (Prosthecochloris vibrioformis (strain DSM 265)) protein is Beta-ketoacyl-[acyl-carrier-protein] synthase III.